Consider the following 125-residue polypeptide: Small ribosomal subunit protein uS13 (125 aa).

Positions 99 to 125 are disordered; the sequence is RGQRTKTNARTRKGKRKTVANKKMAAK.

It belongs to the universal ribosomal protein uS13 family. In terms of assembly, part of the 30S ribosomal subunit. Forms a loose heterodimer with protein S19. Forms two bridges to the 50S subunit in the 70S ribosome.

Its function is as follows. Located at the top of the head of the 30S subunit, it contacts several helices of the 16S rRNA. In the 70S ribosome it contacts the 23S rRNA (bridge B1a) and protein L5 of the 50S subunit (bridge B1b), connecting the 2 subunits; these bridges are implicated in subunit movement. Contacts the tRNAs in the A and P-sites. The polypeptide is Small ribosomal subunit protein uS13 (Borrelia turicatae (strain 91E135)).